Consider the following 373-residue polypeptide: Thyroid hormone receptor beta (373 aa).

Residues 1–18 (MPSSMSGYIPSYLDKDEL) are modulating. Zn(2+) is bound by residues Cys-19, Cys-22, Cys-36, Cys-39, Cys-57, Cys-63, Cys-73, and Cys-76. 2 consecutive NR C4-type zinc fingers follow at residues 19 to 39 (CVVC…CEGC) and 57 to 81 (CKYE…FKKC). Positions 19-93 (CVVCGDKATG…VGMATDLVLD (75 aa)) form a DNA-binding region, nuclear receptor. Positions 129-373 (EEWELIQVVT…PPLFLEVFED (245 aa)) constitute an NR LBD domain. 3,3',5-triiodo-L-thyronine contacts are provided by Arg-194, Asn-243, and His-347. Residues Arg-194, Asn-243, and His-347 each coordinate L-thyroxine.

The protein belongs to the nuclear hormone receptor family. NR1 subfamily.

The protein localises to the nucleus. Its function is as follows. Nuclear hormone receptor that can act as a repressor or activator of transcription. High affinity receptor for thyroid hormones, including triiodothyronine and thyroxine. In Aquarana catesbeiana (American bullfrog), this protein is Thyroid hormone receptor beta (thrb).